A 976-amino-acid chain; its full sequence is 5'-3' exoribonuclease 2 homolog (976 aa).

A CCHC-type zinc finger spans residues 264 to 281; that stretch reads RACELCGQYGHELKECRG. Basic and acidic residues predominate over residues 411 to 420; that stretch reads DEERFKENQK. The interval 411–442 is disordered; it reads DEERFKENQKNKKARMQQYGRGRGGRGRGRGQ. The tract at residues 535 to 788 is interaction with paxt-1; that stretch reads DIRLYESGWK…GICVLYEDPE (254 aa). The tract at residues 815–976 is disordered; it reads WNERRDGRFN…GGYQGNSSWR (162 aa). The segment covering 856–866 has biased composition (low complexity); that stretch reads DRQGGNDNYRG.

This sequence belongs to the 5'-3' exonuclease family. XRN2/RAT1 subfamily. Interacts with paxt-1 (via N-terminus); the interaction is direct and results in stabilization of xrn-2 in the complex.

It localises to the nucleus. Functionally, possesses 5'-&gt;3' exoribonuclease activity. Plays a role in maintenance of steady-state concentration and turnover of microRNAs (miRNA) by degradation of mature miRNA. Degradation role is enhanced when in complex with paxt-1. Partially redundant to xrn-1 in miRNA guide strand degradation. Implicated in differential regulation of mRNAs such as let-7 by controlling the accumulation of mature miRNA. Positively regulates molting of the pharyngeal cuticle. The protein is 5'-3' exoribonuclease 2 homolog of Caenorhabditis briggsae.